Reading from the N-terminus, the 225-residue chain is Urease accessory protein UreG (225 aa).

25 to 32 serves as a coordination point for GTP; sequence GPVGAGKT.

The protein belongs to the SIMIBI class G3E GTPase family. UreG subfamily. As to quaternary structure, homodimer. UreD, UreF and UreG form a complex that acts as a GTP-hydrolysis-dependent molecular chaperone, activating the urease apoprotein by helping to assemble the nickel containing metallocenter of UreC. The UreE protein probably delivers the nickel.

It localises to the cytoplasm. In terms of biological role, facilitates the functional incorporation of the urease nickel metallocenter. This process requires GTP hydrolysis, probably effectuated by UreG. The chain is Urease accessory protein UreG from Haemophilus influenzae (strain ATCC 51907 / DSM 11121 / KW20 / Rd).